A 387-amino-acid polypeptide reads, in one-letter code: Chaperone protein DnaJ (387 aa).

Residues 6–70 enclose the J domain; the sequence is DYYEILGLSR…EKRAQYDRFG (65 aa). Residues 130–212 form a CR-type zinc finger; the sequence is GVRKDIDVPR…CSGTGRVRNT (83 aa). Zn(2+)-binding residues include cysteine 143, cysteine 146, cysteine 160, cysteine 163, cysteine 186, cysteine 189, cysteine 200, and cysteine 203. 4 CXXCXGXG motif repeats span residues 143–150, 160–167, 186–193, and 200–207; these read CSNCSGTG, CPTCGGTG, CSTCRGKG, and CPVCSGTG. Residues 143–162 are disordered; it reads CSNCSGTGARPGTSPKRCPT.

This sequence belongs to the DnaJ family. As to quaternary structure, homodimer. The cofactor is Zn(2+).

It is found in the cytoplasm. Participates actively in the response to hyperosmotic and heat shock by preventing the aggregation of stress-denatured proteins and by disaggregating proteins, also in an autonomous, DnaK-independent fashion. Unfolded proteins bind initially to DnaJ; upon interaction with the DnaJ-bound protein, DnaK hydrolyzes its bound ATP, resulting in the formation of a stable complex. GrpE releases ADP from DnaK; ATP binding to DnaK triggers the release of the substrate protein, thus completing the reaction cycle. Several rounds of ATP-dependent interactions between DnaJ, DnaK and GrpE are required for fully efficient folding. Also involved, together with DnaK and GrpE, in the DNA replication of plasmids through activation of initiation proteins. The sequence is that of Chaperone protein DnaJ from Methanosarcina thermophila.